The sequence spans 196 residues: MVARGKRVVVRQLQTRARRRLPVVLATAPVRPQRKRRQRGRNNKPRGGNGFARRSSQVHEFVFSKDNLNGNSKGSITFGPSLSECKPLADGILKAYHEYNITNVELAYITEASSTSSGSIAYELDPHLKNTTIQSKINKFSITKSEKKKFSRKAINGQAWHDTSEDQFRILYEGNGDAKIAGSFRVTIKVLTQNPK.

The segment at T27–S55 is disordered. Residues P32 to K44 show a composition bias toward basic residues.

This sequence belongs to the luteoviruses capsid protein family.

Its subcellular location is the virion. In terms of biological role, major capsid protein. This is Major capsid protein from Bean leafroll virus (BLRV).